The chain runs to 525 residues: tRNA-2-methylthio-N(6)-dimethylallyladenosine synthase (525 aa).

Positions 14–130 (RTYQVRTYGC…LPTLLERARH (117 aa)) constitute an MTTase N-terminal domain. Residues Cys23, Cys59, Cys93, Cys167, Cys171, and Cys174 each coordinate [4Fe-4S] cluster. The region spanning 153–400 (RESAYAGWVS…IELQERISLE (248 aa)) is the Radical SAM core domain. Residues 403–482 (QAQVGRTLEL…PHHLIADGAL (80 aa)) form the TRAM domain.

The protein belongs to the methylthiotransferase family. MiaB subfamily. Monomer. It depends on [4Fe-4S] cluster as a cofactor.

Its subcellular location is the cytoplasm. It carries out the reaction N(6)-dimethylallyladenosine(37) in tRNA + (sulfur carrier)-SH + AH2 + 2 S-adenosyl-L-methionine = 2-methylsulfanyl-N(6)-dimethylallyladenosine(37) in tRNA + (sulfur carrier)-H + 5'-deoxyadenosine + L-methionine + A + S-adenosyl-L-homocysteine + 2 H(+). Functionally, catalyzes the methylthiolation of N6-(dimethylallyl)adenosine (i(6)A), leading to the formation of 2-methylthio-N6-(dimethylallyl)adenosine (ms(2)i(6)A) at position 37 in tRNAs that read codons beginning with uridine. The protein is tRNA-2-methylthio-N(6)-dimethylallyladenosine synthase of Mycobacterium sp. (strain MCS).